The chain runs to 251 residues: Hydroxyacylglutathione hydrolase (251 aa).

The Zn(2+) site is built by His-53, His-55, Asp-57, His-58, His-110, Asp-127, and His-165.

It belongs to the metallo-beta-lactamase superfamily. Glyoxalase II family. As to quaternary structure, monomer. Zn(2+) is required as a cofactor.

It catalyses the reaction an S-(2-hydroxyacyl)glutathione + H2O = a 2-hydroxy carboxylate + glutathione + H(+). The protein operates within secondary metabolite metabolism; methylglyoxal degradation; (R)-lactate from methylglyoxal: step 2/2. In terms of biological role, thiolesterase that catalyzes the hydrolysis of S-D-lactoyl-glutathione to form glutathione and D-lactic acid. The polypeptide is Hydroxyacylglutathione hydrolase (Erwinia tasmaniensis (strain DSM 17950 / CFBP 7177 / CIP 109463 / NCPPB 4357 / Et1/99)).